Reading from the N-terminus, the 513-residue chain is cAMP-regulated M3R protein (513 aa).

The protein to D.discoideum protein M3L.

This is cAMP-regulated M3R protein (prtB) from Dictyostelium discoideum (Social amoeba).